Consider the following 98-residue polypeptide: UPF0251 protein Sputw3181_3483 (98 aa).

It belongs to the UPF0251 family.

This chain is UPF0251 protein Sputw3181_3483, found in Shewanella sp. (strain W3-18-1).